The sequence spans 208 residues: Anthranilate synthase component 2 (208 aa).

One can recognise a Glutamine amidotransferase type-1 domain in the interval 3 to 208; it reads HVVLIDNHDS…SRCVEQLLAN (206 aa). 53 to 55 provides a ligand contact to L-glutamine; that stretch reads GPG. The active-site Nucleophile; for GATase activity is the Cys80. Residues Gln84 and 145–146 each bind L-glutamine; that span reads SL. Residues His185 and Glu187 each act as for GATase activity in the active site.

As to quaternary structure, heterotetramer consisting of two non-identical subunits: a beta subunit (TrpG) and a large alpha subunit (TrpE).

The enzyme catalyses chorismate + L-glutamine = anthranilate + pyruvate + L-glutamate + H(+). It participates in amino-acid biosynthesis; L-tryptophan biosynthesis; L-tryptophan from chorismate: step 1/5. Part of a heterotetrameric complex that catalyzes the two-step biosynthesis of anthranilate, an intermediate in the biosynthesis of L-tryptophan. In the first step, the glutamine-binding beta subunit (TrpG) of anthranilate synthase (AS) provides the glutamine amidotransferase activity which generates ammonia as a substrate that, along with chorismate, is used in the second step, catalyzed by the large alpha subunit of AS (TrpE) to produce anthranilate. In the absence of TrpG, TrpE can synthesize anthranilate directly from chorismate and high concentrations of ammonia. The polypeptide is Anthranilate synthase component 2 (trpG) (Corynebacterium glutamicum (strain ATCC 13032 / DSM 20300 / JCM 1318 / BCRC 11384 / CCUG 27702 / LMG 3730 / NBRC 12168 / NCIMB 10025 / NRRL B-2784 / 534)).